The following is a 379-amino-acid chain: NADH-rubredoxin oxidoreductase (379 aa).

2 disulfides stabilise this stretch: Cys-26/Cys-286 and Cys-137/Cys-216. FAD-binding positions include 33–35 (NSE), Arg-42, Ala-79, and Tyr-125. Asp-259 contributes to the FAD binding site.

This sequence belongs to the FAD-dependent oxidoreductase family. Monomer. FAD serves as cofactor.

The enzyme catalyses 2 reduced [rubredoxin] + NAD(+) + H(+) = 2 oxidized [rubredoxin] + NADH. Catalyzes the NADH-dependent reduction of rubredoxin (Rd). NADPH is a very poor electron donor compared to NADH. Functions as an intermediate component in the electron transfer chain: NADH-&gt;NROR-&gt;Rd-&gt;FprA1/2. Also functions as an intermediate component in the electron transfer chains from NADH to revRbr and Dfx. Therefore, is a key electron carrier in an efficient multienzyme complex that can scavenge O(2) and reactive oxygen species (ROS), and thus plays an important role in the oxidative stress defense system in C.acetobutylicum, an obligate anaerobic bacterium. This is NADH-rubredoxin oxidoreductase (nroR) from Clostridium acetobutylicum (strain ATCC 824 / DSM 792 / JCM 1419 / IAM 19013 / LMG 5710 / NBRC 13948 / NRRL B-527 / VKM B-1787 / 2291 / W).